Consider the following 375-residue polypeptide: Anhydro-N-acetylmuramic acid kinase (375 aa).

Residue 13–20 coordinates ATP; it reads GTSMDGVD.

It belongs to the anhydro-N-acetylmuramic acid kinase family.

It carries out the reaction 1,6-anhydro-N-acetyl-beta-muramate + ATP + H2O = N-acetyl-D-muramate 6-phosphate + ADP + H(+). The protein operates within amino-sugar metabolism; 1,6-anhydro-N-acetylmuramate degradation. Its pathway is cell wall biogenesis; peptidoglycan recycling. Functionally, catalyzes the specific phosphorylation of 1,6-anhydro-N-acetylmuramic acid (anhMurNAc) with the simultaneous cleavage of the 1,6-anhydro ring, generating MurNAc-6-P. Is required for the utilization of anhMurNAc either imported from the medium or derived from its own cell wall murein, and thus plays a role in cell wall recycling. The chain is Anhydro-N-acetylmuramic acid kinase from Pelagibacter ubique (strain HTCC1062).